The chain runs to 791 residues: Protein CLASP-2 (791 aa).

3 stretches are compositionally biased toward low complexity: residues 259 to 271 (ASDA…SVNS), 323 to 334 (RTPNTRPMTTRT), and 372 to 381 (SQPGSRNGSP). 3 disordered regions span residues 259-283 (ASDA…SKLS), 315-391 (TRMT…TGTL), and 422-454 (AMNT…PQKS). Over residues 422-434 (AMNTAKESLGQPS) the composition is skewed to polar residues.

Belongs to the CLASP family. As to quaternary structure, interacts with hcp-1 and hcp-2.

Its subcellular location is the cytoplasm. The protein localises to the cytoskeleton. It localises to the microtubule organizing center. The protein resides in the centrosome. It is found in the chromosome. Its subcellular location is the centromere. The protein localises to the kinetochore. It localises to the spindle. Probable microtubule plus-end tracking protein that promotes the stabilization of dynamic microtubules. Required for the formation of mitotic and meiotic spindles. Specifically promotes the polymerization of kinetochore-bound microtubules. Also required for cytoplasmic streaming. The chain is Protein CLASP-2 (cls-2) from Caenorhabditis briggsae.